The chain runs to 184 residues: Oligoribonuclease (184 aa).

Residues 9-172 (LIWIDLEMTG…DDIRESIEEL (164 aa)) form the Exonuclease domain. Y130 is an active-site residue.

The protein belongs to the oligoribonuclease family.

The protein localises to the cytoplasm. In terms of biological role, 3'-to-5' exoribonuclease specific for small oligoribonucleotides. The protein is Oligoribonuclease of Actinobacillus pleuropneumoniae serotype 5b (strain L20).